A 290-amino-acid polypeptide reads, in one-letter code: Microtubule-associated protein P320 (290 aa).

8 repeats span residues 1-38, 39-76, 77-114, 115-152, 153-190, 191-228, 229-266, and 267-290; these read SEYR…PIDP and SEYR…DESH. The disordered stretch occupies residues 251–290; the sequence is SHFLTTTHEAYKPIDPSEYRQKRTVGEEVTTDMRHVDESH. Positions 259-290 are enriched in basic and acidic residues; it reads EAYKPIDPSEYRQKRTVGEEVTTDMRHVDESH.

The protein localises to the cytoplasm. The protein resides in the cytoskeleton. The polypeptide is Microtubule-associated protein P320 (Trypanosoma brucei brucei).